The sequence spans 147 residues: Hemoglobin subunit gamma (147 aa).

The Globin domain occupies 3-147 (YFTAEEKAAI…VASALARKYH (145 aa)). The heme b site is built by His-64 and His-93.

Belongs to the globin family. As to quaternary structure, heterotetramer of two alpha chains and two gamma chains in fetal hemoglobin (Hb F). In terms of tissue distribution, red blood cells.

In terms of biological role, gamma chains make up the fetal hemoglobin F, in combination with alpha chains. The sequence is that of Hemoglobin subunit gamma (HBG) from Dugong dugon (Dugong).